Consider the following 444-residue polypeptide: MRNIIYFILSLLFSFKGYALETINIEHGRADPTPIAVNKFNADSSADDVVGHDVVKVISNDLKLSGLFRPISSASFIEEKTGIEYKPLFAAWRQINASLLVNGEVKKLESGKLKISFILWDTLLEKQLAGEILEAPENLWRRAAHKIADKIYEKITGDAGYFDTKIVYVSESTSLPKIKRIALMDYDGANNKYLTNGKSLVLTPRFARSADKIFYVSYATKRRALVYEKDLKTGKESVVGDFSGISFAPRFSPDGRKAVMSIAKNGSTHIYEIDLATKRLHKLTDGFGINTSPSYSPDGKKIVYNSDRNGVPQLYIMNSDGSDVQRISFGGGSYTAPSWSPRGDYIAFTKITRGAEGKTFNIGIMKACPQDDENSERIITSGYLVESPCWSPNGRVIMFAKGWPSRAKAPGKNKIFAIDLTGHNEREIITPADASDPEWSGVLN.

Residues 1–19 form the signal peptide; it reads MRNIIYFILSLLFSFKGYA.

This sequence belongs to the TolB family. The Tol-Pal system is composed of five core proteins: the inner membrane proteins TolA, TolQ and TolR, the periplasmic protein TolB and the outer membrane protein Pal. They form a network linking the inner and outer membranes and the peptidoglycan layer.

It is found in the periplasm. Its function is as follows. Part of the Tol-Pal system, which plays a role in outer membrane invagination during cell division and is important for maintaining outer membrane integrity. The chain is Tol-Pal system protein TolB from Rickettsia felis (strain ATCC VR-1525 / URRWXCal2) (Rickettsia azadi).